The following is a 762-amino-acid chain: MSSHITLIKTNTNNENKMTQFNYKVDNDVMIIRAMVNNVAKQMTPVWPLEKFIACNALHGFESMSFEEAVIQNQTAKKGTPFNEKLERVNWHMIKWCGSFLDIGQGTLEMPHRDKGLYFGFLKLAPFDSALHQNSKSIKSWLSNLPEMPEQAIRLCLDNLGVLNQKQEDFLQSTLSHLPGWAGYIKWISEWKNRNGKEENPVSLVDFIAVRLVITCILWPEASQEEKKKKKDSADTKQLIQNIKNKEDNYRQLLLKKLLPELSKAHIKENRANAQMVFCIDVRSEPFRRCIEKLGHYETLGFAGFFGLPVSIKDYDGETIKDSCPVLLKPRFNIHEKAIAANEHCIEHHEKGKEFKNILNRVYQQLKYNFSTPFALVESLGIWCGITMFLKSCSPIFARRLTKDLNEMICPSIQTQPVFELDLLEKEVGISLQEQIAYAEMALRLMGLTDNFAKLVIFCGHGSSTQNNPYASALDCGACGGNQGGKNAQLLASILNKIIVRRALAENGINIPQDTLFYGAQHDTTTDEVEIYHSNVSQFIHQDILAQLRTDLNMAKYNNNLERINYLNSIDCAEKDIARRSTDWSETRPEWGLARNAAFIVAPRQLTKNINLEGRCFLHSYDWSQDKDGTLLETILTAPMVVAQWINTQYLFSTIDNVAYGSGSKITHNVAGKIGVMQGNASDLMHGLPLQSVMSHDEQSFHEPQRLLTVVYAPREIISELVEKHDVLKTLFFNEWVHLVAIDPRNHLFYKLEKTNTWSVIQ.

Zn(2+) contacts are provided by Cys-279, Asp-281, His-461, and Cys-476.

Belongs to the inorganic carbon transporter (TC 9.A.2) DabA family. Forms a complex with DabB. Zn(2+) is required as a cofactor.

The protein localises to the cell inner membrane. Its function is as follows. Part of an energy-coupled inorganic carbon pump. This is Probable inorganic carbon transporter subunit DabA from Legionella pneumophila (strain Lens).